The chain runs to 205 residues: FMN-dependent NADH:quinone oxidoreductase (205 aa).

Residues Ser10, 16 to 18, and 96 to 99 each bind FMN; these read SHS and MYNF.

It belongs to the azoreductase type 1 family. In terms of assembly, homodimer. It depends on FMN as a cofactor.

The enzyme catalyses 2 a quinone + NADH + H(+) = 2 a 1,4-benzosemiquinone + NAD(+). It catalyses the reaction N,N-dimethyl-1,4-phenylenediamine + anthranilate + 2 NAD(+) = 2-(4-dimethylaminophenyl)diazenylbenzoate + 2 NADH + 2 H(+). Quinone reductase that provides resistance to thiol-specific stress caused by electrophilic quinones. Functionally, also exhibits azoreductase activity. Catalyzes the reductive cleavage of the azo bond in aromatic azo compounds to the corresponding amines. This chain is FMN-dependent NADH:quinone oxidoreductase, found in Nostoc punctiforme (strain ATCC 29133 / PCC 73102).